Reading from the N-terminus, the 631-residue chain is tRNA uridine 5-carboxymethylaminomethyl modification enzyme MnmG (631 aa).

Residues 13–18, Val125, and Ser180 each bind FAD; that span reads GGGHAG. Residue 273 to 287 coordinates NAD(+); that stretch reads GPRYCPSIEDKVNRY. Gln370 is a binding site for FAD.

The protein belongs to the MnmG family. In terms of assembly, homodimer. Heterotetramer of two MnmE and two MnmG subunits. FAD is required as a cofactor.

The protein localises to the cytoplasm. Functionally, NAD-binding protein involved in the addition of a carboxymethylaminomethyl (cmnm) group at the wobble position (U34) of certain tRNAs, forming tRNA-cmnm(5)s(2)U34. This Alcanivorax borkumensis (strain ATCC 700651 / DSM 11573 / NCIMB 13689 / SK2) protein is tRNA uridine 5-carboxymethylaminomethyl modification enzyme MnmG.